A 214-amino-acid chain; its full sequence is ATP phosphoribosyltransferase (214 aa).

Belongs to the ATP phosphoribosyltransferase family. Short subfamily. In terms of assembly, heteromultimer composed of HisG and HisZ subunits.

Its subcellular location is the cytoplasm. The catalysed reaction is 1-(5-phospho-beta-D-ribosyl)-ATP + diphosphate = 5-phospho-alpha-D-ribose 1-diphosphate + ATP. It participates in amino-acid biosynthesis; L-histidine biosynthesis; L-histidine from 5-phospho-alpha-D-ribose 1-diphosphate: step 1/9. Functionally, catalyzes the condensation of ATP and 5-phosphoribose 1-diphosphate to form N'-(5'-phosphoribosyl)-ATP (PR-ATP). Has a crucial role in the pathway because the rate of histidine biosynthesis seems to be controlled primarily by regulation of HisG enzymatic activity. In Lysinibacillus sphaericus (strain C3-41), this protein is ATP phosphoribosyltransferase.